Consider the following 1198-residue polypeptide: Sterol 3-beta-glucosyltransferase (1198 aa).

Polar residues predominate over residues 1–11 (MPITQIISASD). 2 disordered regions span residues 1–89 (MPIT…DNAD) and 124–162 (SQVD…PEVP). Residues 35-51 (RHHRLSRSLSKFKRWRG) are compositionally biased toward basic residues. Over residues 52–67 (RSNSSLSMGSSEQQEL) the composition is skewed to low complexity. Residue Ser76 is modified to Phosphoserine. The span at 146-162 (VKSKKENLKTKSHPEVP) shows a compositional bias: basic and acidic residues. The GRAM 1 domain maps to 187–236 (AKLRQRFCLDEQEPFLNDFPAWLLKDVLVQGHIFITTKHFLFFAYLPKNP). The 99-residue stretch at 238 to 336 (SVKMSGNLNI…WVNALKKEQF (99 aa)) folds into the PH domain. Residues 427–465 (KSSFGKETPATAEQKNNGEDSKYLNVPTSAVPSSENGKK) form a disordered region. Polar residues predominate over residues 452-461 (VPTSAVPSSE). The region spanning 570–636 (ERFRYHFKFN…VDVETCYKEK (67 aa)) is the GRAM 2 domain. Ser693 carries the phosphoserine modification. Positions 749, 750, 752, 1025, 1053, 1054, 1056, 1069, 1072, 1073, 1074, 1093, and 1094 each coordinate UDP-alpha-D-glucose.

Belongs to the glycosyltransferase 28 family.

It localises to the cytoplasm. It is found in the membrane. The enzyme catalyses a sterol + UDP-alpha-D-glucose = a sterol 3-beta-D-glucoside + UDP + H(+). It carries out the reaction ergosterol + UDP-alpha-D-glucose = ergosteryl 3-beta-D-glucoside + UDP + H(+). Its function is as follows. Sterol glycosyltransferase responsible for the glycosylation of ergosterol to form ergosterol-glucoside. Also shows activity in vitro on other sterols such as cholesterol, beta-sitosterol, stigmasterol and tomatidine. In contrasts to what is observed in Pichia pastoris and Aspergillus oryzae, is not involved in cytoplasm to vacuole transport (Cvt), pexophagy or nonselective autophagy in Saccharomyces cerevisiae. In Saccharomyces cerevisiae (strain YJM789) (Baker's yeast), this protein is Sterol 3-beta-glucosyltransferase.